The chain runs to 239 residues: 7-cyano-7-deazaguanine synthase (239 aa).

An ATP-binding site is contributed by 12 to 22 (FSGGQDSATCL). Residues C200, C215, C218, and C221 each coordinate Zn(2+).

The protein belongs to the QueC family. Requires Zn(2+) as cofactor.

It catalyses the reaction 7-carboxy-7-deazaguanine + NH4(+) + ATP = 7-cyano-7-deazaguanine + ADP + phosphate + H2O + H(+). It participates in purine metabolism; 7-cyano-7-deazaguanine biosynthesis. Its function is as follows. Catalyzes the ATP-dependent conversion of 7-carboxy-7-deazaguanine (CDG) to 7-cyano-7-deazaguanine (preQ(0)). The polypeptide is 7-cyano-7-deazaguanine synthase (Hyphomonas neptunium (strain ATCC 15444)).